The following is a 128-amino-acid chain: Large ribosomal subunit protein bL12 (128 aa).

This sequence belongs to the bacterial ribosomal protein bL12 family. As to quaternary structure, homodimer. Part of the ribosomal stalk of the 50S ribosomal subunit. Forms a multimeric L10(L12)X complex, where L10 forms an elongated spine to which 2 to 4 L12 dimers bind in a sequential fashion. Binds GTP-bound translation factors.

Functionally, forms part of the ribosomal stalk which helps the ribosome interact with GTP-bound translation factors. Is thus essential for accurate translation. This chain is Large ribosomal subunit protein bL12, found in Streptomyces antibioticus.